The sequence spans 199 residues: Pneumococcal vaccine antigen A homolog (199 aa).

The protein localises to the cell surface. The sequence is that of Pneumococcal vaccine antigen A homolog (pvaA) from Streptococcus pyogenes serotype M3 (strain ATCC BAA-595 / MGAS315).